The primary structure comprises 121 residues: Large ribosomal subunit protein bL20 (121 aa).

Belongs to the bacterial ribosomal protein bL20 family.

In terms of biological role, binds directly to 23S ribosomal RNA and is necessary for the in vitro assembly process of the 50S ribosomal subunit. It is not involved in the protein synthesizing functions of that subunit. This Polynucleobacter necessarius subsp. necessarius (strain STIR1) protein is Large ribosomal subunit protein bL20.